Reading from the N-terminus, the 309-residue chain is MVLGRGSLCLRSLSVLGAACARRGLGQALLGLSLCHTDFRKNLTVQQDMMKIELLPALTDNYMYLIIDEDTQEAAVVDPVQPQKVIETVKKHRVKLTTVLTTHHHWDHAGGNEKLVKLEPGLKVYGGDDRIGALTHKVTHLSTLEVGSLSVKCLSTPCHTSGHICYFVSKPGSSEPSAVFTGDTLFVAGCGKFYEGTADEMYKALLEVLGRLPPDTKVICGHEYTVNNLKFARHVEPGNTAVQEKLAWAKEKNAIGEPTVPSTLAEEFTYNPFMRVKEKTVQQHAGETDPVTTMRAIRREKDQFKVPRD.

The N-terminal 24 residues, 1–24 (MVLGRGSLCLRSLSVLGAACARRG), are a transit peptide targeting the mitochondrion. N6-acetyllysine is present on lysine 90. 4 residues coordinate Zn(2+): histidine 103, histidine 105, aspartate 107, and histidine 108. N6-acetyllysine is present on lysine 117. The Zn(2+) site is built by histidine 159 and aspartate 183. Substrate-binding positions include 192 to 194 (KFY) and 222 to 224 (HEY). Zn(2+) is bound at residue histidine 222. Lysine 230 is subject to N6-acetyllysine; alternate. The residue at position 230 (lysine 230) is an N6-succinyllysine; alternate. 298-301 (RREK) provides a ligand contact to substrate.

It belongs to the metallo-beta-lactamase superfamily. Glyoxalase II family. Monomer. Zn(2+) is required as a cofactor. In terms of tissue distribution, strongly expressed in testis, skeletal muscle and heart. Weakly expressed in placenta, pancreas, spleen and peripheral blood leukocytes.

Its subcellular location is the mitochondrion matrix. The protein localises to the cytoplasm. The catalysed reaction is an S-(2-hydroxyacyl)glutathione + H2O = a 2-hydroxy carboxylate + glutathione + H(+). The enzyme catalyses (R)-S-lactoylglutathione + H2O = (R)-lactate + glutathione + H(+). The protein operates within secondary metabolite metabolism; methylglyoxal degradation; (R)-lactate from methylglyoxal: step 2/2. Thiolesterase that catalyzes the hydrolysis of S-D-lactoyl-glutathione to form glutathione and D-lactic acid. This chain is Hydroxyacylglutathione hydrolase, mitochondrial (Hagh), found in Rattus norvegicus (Rat).